The primary structure comprises 65 residues: Large ribosomal subunit protein bL35 (65 aa).

The tract at residues 1-51 (MPKMKTNRAAAKRFKKTANGGLKSANAYTSHRFHGKTKKQRRQLRGTDMMD) is disordered. Residues 31–44 (HRFHGKTKKQRRQL) show a composition bias toward basic residues.

This sequence belongs to the bacterial ribosomal protein bL35 family.

This chain is Large ribosomal subunit protein bL35, found in Pediococcus pentosaceus (strain ATCC 25745 / CCUG 21536 / LMG 10740 / 183-1w).